A 129-amino-acid chain; its full sequence is GEL complex subunit OPTI (129 aa).

Residues 1-44 (MSGGRRKEEPPQPQLANGALKVSVWSKVLRSDAAWDDKDEFLDV) are Cytoplasmic-facing. The chain crosses the membrane as a helical span at residues 45 to 65 (IYWFRQIIALVLGVIWGVLPL). A topological domain (lumenal) is located at residue R66. Residues 67–84 (GFLGIAGFCLINAGVLYL) traverse the membrane as a helical segment. Residues 85 to 103 (YFSNYLQIDEEEYGGTWEL) lie on the Cytoplasmic side of the membrane. The helical transmembrane segment at 104–127 (TKEGFMTSFALFMVIWIIFYTAIH) threads the bilayer. Residues 128 to 129 (YD) lie on the Lumenal side of the membrane.

This sequence belongs to the EMC6 family. Component of the GET- and EMC-like (GEL) complex, composed of RAB5IF/OPTI and TMCO1. The GEL complex is part of the multi-pass translocon (MPT) complex, composed of three subcomplexes, the GEL complex (composed of RAB5IF/OPTI and TMCO1), the BOS complex (composed of NCLN/Nicalin, NOMO1 and TMEM147) and the PAT complex (composed of WDR83OS/Asterix and CCDC47). The MPT complex associates with the SEC61 complex. Interacts with NDUFS3, NDUFA4, NDUFV1, NDUFA9 and NDUFS8 of the mitochondrial membrane respiratory chain NADH dehydrogenase (Complex I). Interacts with UQCRC2 of the ubiquinol-cytochrome c reductase complex (Complex III). Interacts with COX5A and COX7C of the cytochrome c oxidase complex (Complex IV). Expressed in neuronal cells.

The protein localises to the endoplasmic reticulum membrane. The protein resides in the mitochondrion inner membrane. Component of the multi-pass translocon (MPT) complex that mediates insertion of multi-pass membrane proteins into the lipid bilayer of membranes. The MPT complex takes over after the SEC61 complex: following membrane insertion of the first few transmembrane segments of proteins by the SEC61 complex, the MPT complex occludes the lateral gate of the SEC61 complex to promote insertion of subsequent transmembrane regions. Within the MPT complex, the GEL subcomplex may mediate insertion of transmembrane regions into the membrane. In addition to its role in multi-pass membrane insertion, RAB5IF/OPTI also acts as an assembly factor for mitochondrial respiratory complexes. This Mus musculus (Mouse) protein is GEL complex subunit OPTI.